A 339-amino-acid polypeptide reads, in one-letter code: Phenylalanine--tRNA ligase alpha subunit (339 aa).

Position 254 (Glu-254) interacts with Mg(2+).

Belongs to the class-II aminoacyl-tRNA synthetase family. Phe-tRNA synthetase alpha subunit type 1 subfamily. Tetramer of two alpha and two beta subunits. Mg(2+) is required as a cofactor.

It localises to the cytoplasm. The catalysed reaction is tRNA(Phe) + L-phenylalanine + ATP = L-phenylalanyl-tRNA(Phe) + AMP + diphosphate + H(+). The polypeptide is Phenylalanine--tRNA ligase alpha subunit (Caldanaerobacter subterraneus subsp. tengcongensis (strain DSM 15242 / JCM 11007 / NBRC 100824 / MB4) (Thermoanaerobacter tengcongensis)).